A 239-amino-acid polypeptide reads, in one-letter code: THAP domain-containing protein 3 (239 aa).

A THAP-type zinc finger spans residues 1 to 82 (MPKSCAARQC…LKHNAVPTVF (82 aa)). Disordered stretches follow at residues 88-125 (PQLV…LGRK) and 139-174 (VGGL…PTQP). The short motif at 176–179 (DHSY) is the HCFC1-binding motif (HBM) element.

As to quaternary structure, component of a THAP1/THAP3-HCFC1-OGT complex that contains at least, either THAP1 or THAP3, HCFC1 and OGT. Interacts directly with OGT and HCFC1 (via its HBM).

Component of a THAP1/THAP3-HCFC1-OGT complex that is required for the regulation of the transcriptional activity of RRM1. This chain is THAP domain-containing protein 3 (THAP3), found in Bos taurus (Bovine).